A 533-amino-acid chain; its full sequence is Leucine-rich glioma-inactivated protein 1 (533 aa).

A signal peptide spans 1–34; sequence MESERSQRMGNACIPLKRIAYCLCLLSALLLTEG. Residues 35-72 form the LRRNT domain; sequence KKPAKPKCPAVCTCTKDNALCENARSIPRTVPPDVISL. LRR repeat units follow at residues 92-113 and 116-137; these read HLEY…TFRG and SLIH…IFKG. In terms of domain architecture, LRRCT spans 149 to 199; sequence NSFNCDCKLKWLVEWLSHTNATVEDIYCEGPPEYKKRKINSLSSKDFDCII. N-linked (GlcNAc...) asparagine glycosylation is present at N168. EAR repeat units follow at residues 201–243, 247–289, 293–340, 342–391, 395–438, 440–482, and 486–528; these read EFAK…EWDH, TFRN…KRDS, KFIK…KWNG, GFYS…QWNK, LFTN…KWGG, SFQD…NWDA, and KFVK…KHVI. N-linked (GlcNAc...) asparagine glycosylation is present at N253. N-linked (GlcNAc...) asparagine glycosylation is present at N398.

As to quaternary structure, oligomer. Interacts with KCNA1 within a complex containing KCNA1, KCNA4 and KCNAB1. Part of a complex containing ADAM22, DLG4/PSD95 and CACNG2 (stargazin). Can bind to ADAM11 and ADAM23. In terms of processing, glycosylated.

It localises to the secreted. Its subcellular location is the synapse. The protein resides in the cytoplasm. In terms of biological role, regulates voltage-gated potassium channels assembled from KCNA1, KCNA4 and KCNAB1. It slows down channel inactivation by precluding channel closure mediated by the KCNAB1 subunit. Ligand for ADAM22 that positively regulates synaptic transmission mediated by AMPA-type glutamate receptors. Plays a role in suppressing the production of MMP1/3 through the phosphatidylinositol 3-kinase/ERK pathway. The protein is Leucine-rich glioma-inactivated protein 1 (LGI1) of Bos taurus (Bovine).